Consider the following 574-residue polypeptide: FAD-linked oxidoreductase sor8 (574 aa).

Positions 1–27 (MYAPPFVRAFGIAVLAVLPSFSSPATA) are cleaved as a signal peptide. Residues asparagine 58, asparagine 112, asparagine 136, asparagine 266, asparagine 312, asparagine 363, and asparagine 384 are each glycosylated (N-linked (GlcNAc...) asparagine). The region spanning 126–305 (VIGTYVQYAV…YSMTVKAHAN (180 aa)) is the FAD-binding PCMH-type domain.

It belongs to the oxygen-dependent FAD-linked oxidoreductase family. The cofactor is FAD.

The protein operates within secondary metabolite biosynthesis. In terms of biological role, FAD-linked oxidoreductase; part of the SOR gene cluster that mediates the biosynthesis of sorbicillinoids, a diverse group of yellow secondary metabolites that restrict growth of competing pathogenic fungi but not of bacteria. Sorbicillinoids biosynthesis requires the action of two PKSs. The SOR cluster is required for the production of trichodimerol and dihydrotrichotetronin, with sor2 being sufficient for production of trichodimerol, but not dihydrotrichotetronin in the light. Sor1 iteratively combines three acetyl units and the growing chain is modified by the ketoacyl reductase subunit, and optional by the enoyl reductase subunit in the second cycle. The polyketide is then handed over to the PKS sor2, which adds three more acetyl units, and two methyl groups. Sor2 releases an aldehyde, which undergoes spontaneous cyclization resulting in the formation of sorbicillin or 2',3'-dihydrosorbicillin. The monooxygenase sor5 oxidizes sorbicillin and 2',3'-dihydrosorbicillin to 2',3'-dihydrosorbicillinol and sorbicillinol, respectively. The oxidoreductase sor8 further converts sorbicillinol into oxosorbicillinol. Sorbicillinol is the building block for the other sorbicillinoids such as disorbicillinol, bisvertinolon, dihydrobisvertinolone, and dihydrotrichotetronine. The sequence is that of FAD-linked oxidoreductase sor8 from Hypocrea jecorina (strain QM6a) (Trichoderma reesei).